Here is a 138-residue protein sequence, read N- to C-terminus: ATP synthase epsilon chain (138 aa).

It belongs to the ATPase epsilon chain family. As to quaternary structure, F-type ATPases have 2 components, CF(1) - the catalytic core - and CF(0) - the membrane proton channel. CF(1) has five subunits: alpha(3), beta(3), gamma(1), delta(1), epsilon(1). CF(0) has three main subunits: a, b and c.

It is found in the cell inner membrane. Its function is as follows. Produces ATP from ADP in the presence of a proton gradient across the membrane. This chain is ATP synthase epsilon chain, found in Endomicrobium trichonymphae.